A 412-amino-acid chain; its full sequence is Short-chain specific acyl-CoA dehydrogenase, mitochondrial (412 aa).

A mitochondrion-targeting transit peptide spans 1 to 24 (MAAALLARASGPARRALCPRAWRQ). Thr27 is subject to Phosphothreonine. At Lys51 the chain carries N6-acetyllysine; alternate. N6-succinyllysine; alternate is present on Lys51. Position 72 is an N6-acetyllysine (Lys72). Lys129 bears the N6-acetyllysine; alternate mark. Lys129 carries the post-translational modification N6-succinyllysine; alternate. FAD contacts are provided by residues 152-161 (FALSEPGNGS) and 185-187 (WIT). Ser161 serves as a coordination point for substrate. Residue Lys208 is modified to N6-acetyllysine. The residue at position 262 (Lys262) is an N6-acetyllysine; alternate. Lys262 bears the N6-succinyllysine; alternate mark. Residue 269-272 (DMGR) participates in substrate binding. An FAD-binding site is contributed by Arg297. Lys306 is subject to N6-acetyllysine; alternate. Lys306 carries the N6-succinyllysine; alternate modification. FAD contacts are provided by residues Gln308 and 365 to 369 (QILGG). The active-site Proton acceptor is Glu392. Position 393 (Gly393) interacts with substrate. Residue 394 to 396 (TSE) participates in FAD binding.

The protein belongs to the acyl-CoA dehydrogenase family. In terms of assembly, homotetramer. The cofactor is FAD.

It is found in the mitochondrion matrix. The catalysed reaction is a short-chain 2,3-saturated fatty acyl-CoA + oxidized [electron-transfer flavoprotein] + H(+) = a short-chain (2E)-enoyl-CoA + reduced [electron-transfer flavoprotein]. It catalyses the reaction butanoyl-CoA + oxidized [electron-transfer flavoprotein] + H(+) = (2E)-butenoyl-CoA + reduced [electron-transfer flavoprotein]. The enzyme catalyses pentanoyl-CoA + oxidized [electron-transfer flavoprotein] + H(+) = (2E)-pentenoyl-CoA + reduced [electron-transfer flavoprotein]. It carries out the reaction hexanoyl-CoA + oxidized [electron-transfer flavoprotein] + H(+) = (2E)-hexenoyl-CoA + reduced [electron-transfer flavoprotein]. It participates in lipid metabolism; mitochondrial fatty acid beta-oxidation. Its function is as follows. Short-chain specific acyl-CoA dehydrogenase is one of the acyl-CoA dehydrogenases that catalyze the first step of mitochondrial fatty acid beta-oxidation, an aerobic process breaking down fatty acids into acetyl-CoA and allowing the production of energy from fats. The first step of fatty acid beta-oxidation consists in the removal of one hydrogen from C-2 and C-3 of the straight-chain fatty acyl-CoA thioester, resulting in the formation of trans-2-enoyl-CoA. Among the different mitochondrial acyl-CoA dehydrogenases, short-chain specific acyl-CoA dehydrogenase acts specifically on acyl-CoAs with saturated 4 to 6 carbons long primary chains. This is Short-chain specific acyl-CoA dehydrogenase, mitochondrial (ACADS) from Homo sapiens (Human).